A 220-amino-acid chain; its full sequence is Urease accessory protein UreF (220 aa).

It belongs to the UreF family. UreD, UreF and UreG form a complex that acts as a GTP-hydrolysis-dependent molecular chaperone, activating the urease apoprotein by helping to assemble the nickel containing metallocenter of UreC. The UreE protein probably delivers the nickel.

It localises to the cytoplasm. Functionally, required for maturation of urease via the functional incorporation of the urease nickel metallocenter. This Bordetella bronchiseptica (strain ATCC BAA-588 / NCTC 13252 / RB50) (Alcaligenes bronchisepticus) protein is Urease accessory protein UreF.